We begin with the raw amino-acid sequence, 330 residues long: Diacylglycerol acyltransferase/mycolyltransferase Ag85B (330 aa).

Residues 1–40 form the signal peptide; it reads MTDLSEKVRAWGRRLLVGAAAAVTLPGLIGLAGGAATANA. 82 to 83 provides a ligand contact to substrate; sequence LR. The interval 98–108 is fibronectin-binding; it reads FEWYYQSGLSV. An intrachain disulfide couples Cys-127 to Cys-132. Substrate is bound by residues Ser-166 and Asp-194. Catalysis depends on Ser-166, which acts as the Nucleophile. Residue Glu-270 is part of the active site. Residues 272–275, Lys-279, and 302–304 contribute to the substrate site; these read FVRS and HSW. Residue His-302 is part of the active site.

This sequence belongs to the mycobacterial A85 antigen family.

It is found in the secreted. It catalyses the reaction 2 alpha,alpha'-trehalose 6-mycolate = alpha,alpha'-trehalose 6,6'-bismycolate + alpha,alpha-trehalose. The enzyme catalyses an acyl-CoA + a 1,2-diacyl-sn-glycerol = a triacyl-sn-glycerol + CoA. The antigen 85 proteins (FbpA, FbpB, FbpC) are responsible for the high affinity of mycobacteria for fibronectin, a large adhesive glycoprotein, which facilitates the attachment of M.tuberculosis to murine alveolar macrophages (AMs). They also help to maintain the integrity of the cell wall by catalyzing the transfer of mycolic acids to cell wall arabinogalactan and through the synthesis of alpha,alpha-trehalose dimycolate (TDM, cord factor). They catalyze the transfer of a mycoloyl residue from one molecule of alpha,alpha-trehalose monomycolate (TMM) to another TMM, leading to the formation of TDM. The protein is Diacylglycerol acyltransferase/mycolyltransferase Ag85B (fbpB) of Mycobacterium avium.